The following is a 796-amino-acid chain: Protein translocase subunit SecA 2 (796 aa).

ATP-binding positions include Gln-84, Gly-102–Thr-106, and Asp-496.

The protein belongs to the SecA family. Monomer and homodimer. Part of the essential Sec protein translocation apparatus which comprises SecA, SecYEG and auxiliary proteins SecDF. Other proteins may also be involved.

Its subcellular location is the cell membrane. The protein resides in the cytoplasm. It catalyses the reaction ATP + H2O + cellular proteinSide 1 = ADP + phosphate + cellular proteinSide 2.. Functionally, part of the Sec protein translocase complex. Interacts with the SecYEG preprotein conducting channel. Has a central role in coupling the hydrolysis of ATP to the transfer of proteins into and across the cell membrane, serving as an ATP-driven molecular motor driving the stepwise translocation of polypeptide chains across the membrane. The sequence is that of Protein translocase subunit SecA 2 from Staphylococcus epidermidis (strain ATCC 35984 / DSM 28319 / BCRC 17069 / CCUG 31568 / BM 3577 / RP62A).